The chain runs to 249 residues: 1-(5-phosphoribosyl)-5-[(5-phosphoribosylamino)methylideneamino] imidazole-4-carboxamide isomerase (249 aa).

Catalysis depends on Asp11, which acts as the Proton acceptor. Asp133 (proton donor) is an active-site residue.

The protein belongs to the HisA/HisF family.

Its subcellular location is the cytoplasm. The catalysed reaction is 1-(5-phospho-beta-D-ribosyl)-5-[(5-phospho-beta-D-ribosylamino)methylideneamino]imidazole-4-carboxamide = 5-[(5-phospho-1-deoxy-D-ribulos-1-ylimino)methylamino]-1-(5-phospho-beta-D-ribosyl)imidazole-4-carboxamide. The protein operates within amino-acid biosynthesis; L-histidine biosynthesis; L-histidine from 5-phospho-alpha-D-ribose 1-diphosphate: step 4/9. This chain is 1-(5-phosphoribosyl)-5-[(5-phosphoribosylamino)methylideneamino] imidazole-4-carboxamide isomerase, found in Actinobacillus succinogenes (strain ATCC 55618 / DSM 22257 / CCUG 43843 / 130Z).